Reading from the N-terminus, the 102-residue chain is NADH-quinone oxidoreductase subunit K (102 aa).

Helical transmembrane passes span 6-26, 30-50, and 62-82; these read LEHGLIVATILFALGFYGVMV, LLFMLMSLEIMMNAAALAFVL, and VMFILILTLAAAEACIGLAIV.

Belongs to the complex I subunit 4L family. NDH-1 is composed of 14 different subunits. Subunits NuoA, H, J, K, L, M, N constitute the membrane sector of the complex.

The protein localises to the cell inner membrane. The catalysed reaction is a quinone + NADH + 5 H(+)(in) = a quinol + NAD(+) + 4 H(+)(out). Functionally, NDH-1 shuttles electrons from NADH, via FMN and iron-sulfur (Fe-S) centers, to quinones in the respiratory chain. The immediate electron acceptor for the enzyme in this species is believed to be ubiquinone. Couples the redox reaction to proton translocation (for every two electrons transferred, four hydrogen ions are translocated across the cytoplasmic membrane), and thus conserves the redox energy in a proton gradient. The protein is NADH-quinone oxidoreductase subunit K of Acinetobacter baumannii (strain AB307-0294).